A 260-amino-acid chain; its full sequence is Putative nudix hydrolase 6 (260 aa).

The Nudix hydrolase domain occupies 113–257 (PNHAADPIVS…SHFIDLLKES (145 aa)). The Nudix box signature appears at 148–170 (GMVDAGEHVSQTLRREFAEEAMH). Mg(2+) contacts are provided by glutamate 163 and glutamate 167.

The protein belongs to the Nudix hydrolase family. Mg(2+) serves as cofactor. The cofactor is Mn(2+).

In terms of biological role, probably mediates the hydrolysis of some nucleoside diphosphate derivatives. In Caenorhabditis elegans, this protein is Putative nudix hydrolase 6 (ndx-6).